Here is a 352-residue protein sequence, read N- to C-terminus: Non-disjunction protein 1 (352 aa).

Interacts with MPS3.

It is found in the nucleus. It localises to the chromosome. The protein resides in the telomere. Required for telomeric clustering (bouquet stage) during meiosis 1 prophase, formation and efficient homolog pairing, meiosis 1 disjunction, and telomere deletion during meiosis. Also promotes meiotic recombination. This chain is Non-disjunction protein 1 (NDJ1), found in Saccharomyces cerevisiae (strain ATCC 204508 / S288c) (Baker's yeast).